The chain runs to 873 residues: MQDKYTPAAVEATAQQHWESTQAFKVAEDAGKPKYYCLSMFPYPSGKLHMGHVRNYTIGDVLARYHRMRGFNVLQPMGWDAFGMPAENAAIQNNVPPAKWTYANIDYMKTQLKRLGFALDWSRELATCKPDYYRWEQWLFTRLYQKGLIYKKLGTVNWDPVDETVLANEQVIDGRGWRSGALIEKREIPMYYMKITAYADELLEALDTLTGWPEQVKLMQKNWIGRSEGVEVHFPYEVSTIGASGVLKVFTTRADTLMGATYVAVAAEHPLALQAAVNDPELAAFIEECRHGGVAEADLATMEKKGMPTGLRVVHPLTGEHLPVWIANYVLMGYGEGAVMAVPAHDERDFAFATKYRLPIRMVVRSTRDAYTDTVAPWQDAYAEQGRLVNSGKYDGLHFHDAIEAIAAELTAKGLGAKRTQYRLRDWGISRQRYWGCPIPMIHCADCGDVPVPDEQLPVVLPEDVAVTGRGSPLAKMPRFYECDCPKCGKPAKRETDTMDTFVESSWYFLRYASADNGQAMVDERVNYWAPVDQYIGGIEHAILHLLYSRFFTRAMRDEGLVNVSEPFTNLLTQGMVVAETYYRDADGGKKQWINPADVEVERDEKGRIVAAKLTADGAPVVIGGIEKMAKSKNNGVDPQALVDQYGADTARLFIIFAAPPDQQLEWSDSGVEGAYRFLRRVWSFGHAFVSEFRPQLPADRQLDAVQLPEALAAVRREIHVCLRQANYDFGKHQFNTVVSAAMKILNALEKAPRDVAAAHAQVAEEGLDILLRLLAPITPHVAHALWQDCGFTGDVLHASWPEPSEDALRQDEIDLVLQVNGKLRGSLRVAAGASNSAIEALALGSETAQKFMEGKPPRKVVVVPGRLVNIVV.

The short motif at 42-52 (PYPSGKLHMGH) is the 'HIGH' region element. Residues 628–632 (KMAKS) carry the 'KMSKS' region motif. Lys631 is an ATP binding site.

The protein belongs to the class-I aminoacyl-tRNA synthetase family.

The protein resides in the cytoplasm. The enzyme catalyses tRNA(Leu) + L-leucine + ATP = L-leucyl-tRNA(Leu) + AMP + diphosphate. The sequence is that of Leucine--tRNA ligase from Aromatoleum aromaticum (strain DSM 19018 / LMG 30748 / EbN1) (Azoarcus sp. (strain EbN1)).